The chain runs to 587 residues: DELLA protein GAIP-B (587 aa).

The segment at 1-23 is disordered; sequence MKREHHHLHPRPDPPSMAAAPNG. The DELLA motif signature appears at 46 to 50; it reads DELLA. Residues 209-577 form the GRAS domain; it reads VDSQENGIQL…RPLIVTSAWK (369 aa). A leucine repeat I (LRI) region spans residues 216 to 270; it reads IQLVHALMACAEAVQQNNLNLAEALEKRIGYLAVSQAGAMRKVATFFAEALARRI. The VHIID stretch occupies residues 288 to 353; the sequence is QLHFYESSPY…SGPPAFRLTG (66 aa). Positions 319–323 match the VHIID motif; sequence VHVID. Positions 367–399 are leucine repeat II (LRII); the sequence is DVGWKLAKLVETINVEFEYRGFVANSLADLDAS. A PFYRE region spans residues 411 to 498; that stretch reads VVVNSVFELH…EMYLGKQICN (88 aa). The short motif at 419–423 is the LXXLL motif element; the sequence is LHKLL. An SAW region spans residues 501–577; that stretch reads ACEGSDRVEW…RPLIVTSAWK (77 aa).

It belongs to the GRAS family. DELLA subfamily. In terms of processing, phosphorylated. Ubiquitinated. Upon GA application it is ubiquitinated, leading to its subsequent degradation.

It is found in the nucleus. Probable transcriptional regulator that acts as a repressor of the gibberellin (GA) signaling pathway. Probably acts by participating in large multiprotein complexes that represses transcription of GA-inducible genes. Upon GA application, it is degraded by the proteasome, allowing the GA signaling pathway. The polypeptide is DELLA protein GAIP-B (GAIPB) (Cucurbita maxima (Pumpkin)).